Here is a 193-residue protein sequence, read N- to C-terminus: MEEIKVHIGKTVALMNDNIDTDQIIPKSFLKRIERTGFGEFLFDSWRYLPNRKPNPDFPLNALDRQEATILITGENFGCGSSREHAAWALLDYRFRVIIAGSYSDIFYMNCTKNGVLPIVLPREAREKLAKIAAEENVTIDLPNQQVISSVGTYPFEIDATWKNKFINGLDDIAITFEHIDAIKAYEQKVDSI.

The protein belongs to the LeuD family. LeuD type 1 subfamily. As to quaternary structure, heterodimer of LeuC and LeuD.

The catalysed reaction is (2R,3S)-3-isopropylmalate = (2S)-2-isopropylmalate. It participates in amino-acid biosynthesis; L-leucine biosynthesis; L-leucine from 3-methyl-2-oxobutanoate: step 2/4. Catalyzes the isomerization between 2-isopropylmalate and 3-isopropylmalate, via the formation of 2-isopropylmaleate. This chain is 3-isopropylmalate dehydratase small subunit, found in Listeria monocytogenes serovar 1/2a (strain ATCC BAA-679 / EGD-e).